A 377-amino-acid chain; its full sequence is Mitogen-activated protein kinase pmk-1 (377 aa).

The 285-residue stretch at 35–319 (YINLTPIGTG…AKEAMEHEYL (285 aa)) folds into the Protein kinase domain. ATP contacts are provided by residues 41–49 (IGTGAYGTV) and Lys64. The Proton acceptor role is filled by Asp179. Thr191 is modified (phosphothreonine). The short motif at 191–193 (TGY) is the TXY element. The residue at position 193 (Tyr193) is a Phosphotyrosine.

The protein belongs to the protein kinase superfamily. CMGC Ser/Thr protein kinase family. MAP kinase subfamily. In terms of assembly, interacts with transcription factor atf-7; perhaps in a manner dependent on dual specificity protein kinase sek-1. Requires Mg(2+) as cofactor. The cofactor is Mn(2+). Post-translationally, dually phosphorylated on Thr-191 and Tyr-193, probably by sek-1, which activates the enzyme. Increased phosphorylation in response to the heavy metal arsenite. Increased phosphorylation in response to intestinal colonization by probiotic Lactobacillus fermentum strain JDFM216. As to expression, expressed in intestinal cells.

It localises to the nucleus. The catalysed reaction is L-seryl-[protein] + ATP = O-phospho-L-seryl-[protein] + ADP + H(+). It carries out the reaction L-threonyl-[protein] + ATP = O-phospho-L-threonyl-[protein] + ADP + H(+). Its activity is regulated as follows. Activated by phosphorylation on threonine and tyrosine. Inhibited by pyridinyl-imidazole related compounds. Functionally, serine/threonine kinase which responds to activation by environmental stress and pro-inflammatory cytokines by phosphorylating downstream targets. As part of a MAP kinase signaling pathway, plays a role in modulation of lifespan and immunity. Phosphorylates skn-1 which probably regulates skn-1 nuclear translocation in response to oxidative stress. Probably by activating skn-1, involved in the up-regulation of gcs-1 and glutathione-S-transferase gst-4 expression upon bacteria infection. Up-regulates expression of gcs-1 in intestinal cells upon arsenite treatment. Functions downstream of the MAPKK sek-1 and the MAPKKK nsy-1 as the MAP kinase which regulates pathogen resistance and responses to oxidative stress. Required for expression of antimicrobial peptide nlp-29 in response to fungal infection or physical injury. Involved in resistance to the nematotoxic C.cinerea galectin (Cgl2). May play a redundant role with other MAP kinases in susceptibility to anoxia, downstream of tir-1/nsy-1. Phosphorylates transcription factor rnt-1 during oxidative stress which results in rnt-1 stabilization in the intestine. Phosphorylates transcription factor atf-7 during pathogen infection resulting in modulation of target genes. Probably downstream of nsy-1 and sek-1, involved in germline apoptosis induced by heavy metals, such as Cu(2+). Regulates the basal expression of immune effector genes including irg-4, irg-5, mul-1 and drd-50. This chain is Mitogen-activated protein kinase pmk-1, found in Caenorhabditis elegans.